The chain runs to 302 residues: S-adenosylmethionine sensor upstream of mTORC1 (302 aa).

The S-adenosyl-L-homocysteine site is built by Arg-73, Gly-132, and Asp-150. Residues Arg-73, Gly-132, Asp-150, Leu-151, Asp-162, Phe-163, and Ser-196 each coordinate S-adenosyl-L-methionine. S-adenosyl-L-homocysteine-binding residues include Asp-162, Phe-163, and Ser-196.

Belongs to the BMT2/SAMTOR family.

S-adenosyl-L-methionine-binding protein. It is unclear whether this protein acts as a sensor of S-adenosyl-L-methionine to signal methionine sufficiency to mTORC1. Probably acts as a S-adenosyl-L-methionine-dependent methyltransferase. The sequence is that of S-adenosylmethionine sensor upstream of mTORC1 from Drosophila melanogaster (Fruit fly).